A 105-amino-acid chain; its full sequence is uncharacterized protein (105 aa).

The region spanning M1–V101 is the Hcy-binding domain.

This is an uncharacterized protein from Saccharomyces cerevisiae (strain ATCC 204508 / S288c) (Baker's yeast).